The sequence spans 327 residues: 2-keto-3-deoxygluconate permease (327 aa).

Transmembrane regions (helical) follow at residues 10–30 (IPGG…TFSP), 42–62 (GMIT…GASI), 73–93 (KSGT…AIAS), 95–115 (IIPE…LALV), 139–159 (AGAF…IILG), 163–183 (IASF…VGFA), 199–219 (VQTL…LTVI), 224–244 (LLGI…LIIA), 254–274 (TAGI…VLIA), and 289–309 (SLVA…TSIW).

It belongs to the KdgT transporter family.

Its subcellular location is the cell inner membrane. The enzyme catalyses 2-dehydro-3-deoxy-D-gluconate(in) + H(+)(in) = 2-dehydro-3-deoxy-D-gluconate(out) + H(+)(out). Its function is as follows. Catalyzes the proton-dependent uptake of 2-keto-3-deoxygluconate (KDG) into the cell. The protein is 2-keto-3-deoxygluconate permease of Escherichia coli O7:K1 (strain IAI39 / ExPEC).